A 527-amino-acid chain; its full sequence is Cytochrome P450 monooxyhenase eriA (527 aa).

Residues 17–37 form a helical membrane-spanning segment; the sequence is LGVVDLSLLGVGAVIAFAWLF. N-linked (GlcNAc...) asparagine glycans are attached at residues asparagine 77, asparagine 274, and asparagine 297. Cysteine 453 contacts heme.

It belongs to the cytochrome P450 family. The cofactor is heme.

It is found in the membrane. It catalyses the reaction cyathadiol + reduced [NADPH--hemoprotein reductase] + O2 = cyathatriol + oxidized [NADPH--hemoprotein reductase] + H2O + H(+). It participates in secondary metabolite biosynthesis. Functionally, cytochrome P450 monooxygenase; part of the gene cluster that mediates the biosynthesis of erinacines, cyathane-xylosides that show unique biological activities, including leishmanicidal activity, stimulating activity for nerve growth-factor synthesis, and agonistic activity toward the kappa opioid receptor. Within the pathway, eriA catalyzes C-11 hydroxylation in the presence of the short chain dehydrogenase/reductase (SDR) eriH, which leads to the production of cyathatriol. The first step of the erinacines biosynthesis pathway is catalyzed by the geranylgeranyl diphosphate (GGPP) synthase eriE via conversion of farnesyl pyrophosphate and isopentyl pyrophosphate into geranylgeranyl pyrophosphate (GGPP). GGPP is then substrate of the diterpene cyclase eriG for the production of cyatha-3,12-diene. The cytochrome P450 monooxygenase eriI then hydroxylates cyatha-3,12-diene at C-14 of the seven-membered ring to produce erinacol, which is further hydroxylated at C-15 by the cytochrome P450 monooxygenase eriC to yield cyathadiol. The cytochrome P450 monooxygenase eriA then catalyzes C-11 hydroxylation in the presence of the short chain dehydrogenase/reductase (SDR) eriH, which leads to the production of cyathatriol. The acetyltransferase eriL converts cyathatriol into 11-O-acetyl-cyathatriol. The SDR eriH catalyzes further oxidation of 11-O-acetyl-cyathatriol into 1-O-acetylcyathin A3. Finally, the glycosyl transferase eriJ tranfers xylose from UDP-xylose onto C-14 of 11-O-acetyl-cyathatriol to form eracine Q. EriJ is also able to convert 11-O-acetyl-cyathatriol to eracine Q2 by using UDP-D-glucose as cosubstrate, but at a lower rate. This chain is Cytochrome P450 monooxyhenase eriA, found in Hericium erinaceus (Lion's mane mushroom).